Consider the following 445-residue polypeptide: Trigger factor (445 aa).

In terms of domain architecture, PPIase FKBP-type spans glycine 168–proline 253.

The protein belongs to the FKBP-type PPIase family. Tig subfamily.

Its subcellular location is the cytoplasm. The enzyme catalyses [protein]-peptidylproline (omega=180) = [protein]-peptidylproline (omega=0). Functionally, involved in protein export. Acts as a chaperone by maintaining the newly synthesized protein in an open conformation. Functions as a peptidyl-prolyl cis-trans isomerase. This is Trigger factor from Hyphomonas neptunium (strain ATCC 15444).